The chain runs to 253 residues: Ras-like protein family member 11A-like (253 aa).

Residues 43 to 50 (GASNVGKT), 90 to 97 (DTPCVSLQ), and 157 to 160 (NKSD) contribute to the GTP site. Residues 213–233 (GNGEKRKGGLHLARPKSPNMQ) are disordered.

The protein belongs to the small GTPase superfamily. Ras family.

Its subcellular location is the nucleus. It is found in the nucleolus. It catalyses the reaction GTP + H2O = GDP + phosphate + H(+). Functionally, regulator of rDNA transcription. This is Ras-like protein family member 11A-like from Danio rerio (Zebrafish).